Here is a 719-residue protein sequence, read N- to C-terminus: Serine/threonine-protein kinase CBK1 (719 aa).

2 disordered regions span residues 1-75 and 100-219; these read MFGQ…GAGF and MQQQ…QTSG. A compositionally biased stretch (polar residues) spans 24 to 38; that stretch reads QFSSAYMEQQGSHQS. Residues 40-63 show a composition bias toward low complexity; it reads QEHLAYEQLQLQQQQQQQQQHAAA. Composition is skewed to polar residues over residues 112 to 130, 139 to 157, and 181 to 219; these read ATSI…NDTT, GHYS…SSAY, and GDQT…QTSG. The Protein kinase domain occupies 310–631; the sequence is FHTVKVIGKG…ANEIKNHPFF (322 aa). Residues 316–324 and Lys-339 each bind ATP; that span reads IGKGAFGEV. Asp-433 acts as the Proton acceptor in catalysis. The region spanning 632 to 717 is the AGC-kinase C-terminal domain; the sequence is RGVDWETIRQ…SRFDYLTRKN (86 aa).

This sequence belongs to the protein kinase superfamily. STE Ser/Thr protein kinase family. COT1 subfamily.

The enzyme catalyses L-seryl-[protein] + ATP = O-phospho-L-seryl-[protein] + ADP + H(+). It carries out the reaction L-threonyl-[protein] + ATP = O-phospho-L-threonyl-[protein] + ADP + H(+). Functionally, protein kinase that seems to play a role in the regulation of cell morphogenesis and proliferation. The protein is Serine/threonine-protein kinase CBK1 (CBK1) of Eremothecium gossypii (strain ATCC 10895 / CBS 109.51 / FGSC 9923 / NRRL Y-1056) (Yeast).